The primary structure comprises 77 residues: Small ribosomal subunit protein bS21 (77 aa).

The protein belongs to the bacterial ribosomal protein bS21 family.

In Bartonella tribocorum (strain CIP 105476 / IBS 506), this protein is Small ribosomal subunit protein bS21.